The following is a 420-amino-acid chain: rRNA methyltransferase 3, mitochondrial (420 aa).

The transit peptide at 1-40 (MAALVRPARFVVRPLLQVVQAWDLDARRWVRALRRSPVKV) directs the protein to the mitochondrion. The interval 49 to 88 (EQKRAPGKQPRKAPSEASAQEQREKQPLEESASRAPSTWE) is disordered. Residues 69 to 80 (EQREKQPLEESA) show a composition bias toward basic and acidic residues. 3 residues coordinate S-adenosyl-L-methionine: Gly356, Ile380, and Leu389.

This sequence belongs to the class IV-like SAM-binding methyltransferase superfamily. RNA methyltransferase TrmH family. In terms of tissue distribution, expressed at same level in normal liver and hepatocarcinoma.

The protein localises to the mitochondrion. It carries out the reaction guanosine(1370) in 16S rRNA + S-adenosyl-L-methionine = 2'-O-methylguanosine(1370) in 16S rRNA + S-adenosyl-L-homocysteine + H(+). In terms of biological role, S-adenosyl-L-methionine-dependent 2'-O-ribose methyltransferase that catalyzes the formation of 2'-O-methylguanosine at position 1370 (Gm1370) in the 16S mitochondrial large subunit ribosomal RNA (mtLSU rRNA), a conserved modification in the peptidyl transferase domain of the mtLSU rRNA. Also required for formation of 2'-O-methyluridine at position 1369 (Um1369) mediated by MRM2. This is rRNA methyltransferase 3, mitochondrial from Homo sapiens (Human).